The primary structure comprises 103 residues: Cell division protein FtsB (103 aa).

Residues M1–K3 are Cytoplasmic-facing. A helical membrane pass occupies residues L4–F21. The Periplasmic portion of the chain corresponds to G22–R103. Positions N33–G62 form a coiled coil.

It belongs to the FtsB family. Part of a complex composed of FtsB, FtsL and FtsQ.

The protein localises to the cell inner membrane. In terms of biological role, essential cell division protein. May link together the upstream cell division proteins, which are predominantly cytoplasmic, with the downstream cell division proteins, which are predominantly periplasmic. The chain is Cell division protein FtsB from Salmonella agona (strain SL483).